The primary structure comprises 397 residues: MAKAKFERTKPHVNIGTIGHIDHGKTTLTAAITKVLHDAYPDLNEASAFDQIDKAPEERQRGITISIAHVEYQTETRHYAHVDCPGHADYIKNMITGAAQMDGAILVVAATDGPMPQTKEHVLLARQVGVPYIVVALNKADMVDDEEILELVELEVRELLSEYEFPGDDLPVVKVSALKALEGDKEWGQSVLDLMKAVDENIPQPERDVDKPFLMPIEDVFTITGRGTVVTGRIERGVLKVNETVDIVGIKTEKTTTTVTGIEMFRKLLDEGQAGENVGLLLRGIKREDVERGQVIIKPGSVTPHTEFEAQAYILSKDEGGRHTPFFNNYRPQFYFRTTDVTGVVTLPEGTEMVMPGDNTEMTVELIQPVAMEEGLKFAIREGGRTVGAGQVTKINK.

The 197-residue stretch at 10 to 206 (KPHVNIGTIG…AVDENIPQPE (197 aa)) folds into the tr-type G domain. The segment at 19-26 (GHIDHGKT) is G1. 19 to 26 (GHIDHGKT) contacts GTP. T26 contributes to the Mg(2+) binding site. Positions 62-66 (GITIS) are G2. Residues 83 to 86 (DCPG) form a G3 region. GTP-binding positions include 83–87 (DCPGH) and 138–141 (NKAD). The G4 stretch occupies residues 138-141 (NKAD). Residues 176–178 (SAL) are G5.

The protein belongs to the TRAFAC class translation factor GTPase superfamily. Classic translation factor GTPase family. EF-Tu/EF-1A subfamily. As to quaternary structure, monomer.

The protein localises to the cytoplasm. The enzyme catalyses GTP + H2O = GDP + phosphate + H(+). Its function is as follows. GTP hydrolase that promotes the GTP-dependent binding of aminoacyl-tRNA to the A-site of ribosomes during protein biosynthesis. This Streptomyces avermitilis (strain ATCC 31267 / DSM 46492 / JCM 5070 / NBRC 14893 / NCIMB 12804 / NRRL 8165 / MA-4680) protein is Elongation factor Tu 1.